The primary structure comprises 375 residues: Filamin-binding LIM protein 1 (375 aa).

Positions 1–70 are filamin-binding; that stretch reads MASKPEKRVA…SPWTPPGRAA (70 aa). 2 disordered regions span residues 43–119 and 137–176; these read WEAP…PSEE and HLSPPLPPPPPQAPAERPSVQPSPLRPMEEELPPPPAERV. 2 stretches are compositionally biased toward pro residues: residues 104–114 and 140–149; these read FPPPPPPPPVL and PPLPPPPPQA. The segment covering 150-159 has biased composition (low complexity); the sequence is PAERPSVQPS. 3 LIM zinc-binding domains span residues 183 to 244, 245 to 302, and 303 to 372; these read DICA…TLER, CGKC…RKFA, and PVCS…RSAA. Positions 278–375 are FERMT2-binding; that stretch reads IGDESFALGS…HVKRSAAGCC (98 aa).

Interacts with FERMT2, FLNA, FLNB and FLNC. Interacts with NKX2-5.

It localises to the cell junction. It is found in the focal adhesion. The protein resides in the cytoplasm. Its subcellular location is the cytoskeleton. The protein localises to the stress fiber. In terms of biological role, serves as an anchoring site for cell-ECM adhesion proteins and filamin-containing actin filaments. Is implicated in cell shape modulation (spreading) and motility. May participate in the regulation of filamin-mediated cross-linking and stabilization of actin filaments. May also regulate the assembly of filamin-containing signaling complexes that control actin assembly. Promotes dissociation of FLNA from ITGB3 and ITGB7. Promotes activation of integrins and regulates integrin-mediated cell-cell adhesion. The chain is Filamin-binding LIM protein 1 (FBLIM1) from Pongo abelii (Sumatran orangutan).